The following is a 472-amino-acid chain: UDP-N-acetylmuramate--L-alanine ligase (472 aa).

122–128 is an ATP binding site; it reads GSHGKTT.

It belongs to the MurCDEF family.

It localises to the cytoplasm. The catalysed reaction is UDP-N-acetyl-alpha-D-muramate + L-alanine + ATP = UDP-N-acetyl-alpha-D-muramoyl-L-alanine + ADP + phosphate + H(+). It participates in cell wall biogenesis; peptidoglycan biosynthesis. Cell wall formation. The sequence is that of UDP-N-acetylmuramate--L-alanine ligase from Prochlorococcus marinus (strain SARG / CCMP1375 / SS120).